Consider the following 396-residue polypeptide: Multidrug efflux protein YfmO (396 aa).

The next 12 helical transmembrane spans lie at 20-40 (VWAV…VDPI), 56-76 (SLLF…SGAI), 80-100 (IGAK…AGLG), 114-134 (GGWG…IVGV), 142-162 (AIIL…LAGG), 171-191 (APFF…SFML), 214-234 (GLLT…ILLA), 249-269 (YVFF…APLV), 278-298 (SLVV…IWTD), 301-321 (TLII…NTIM), 339-359 (AYSS…GMLS), and 364-384 (ASTP…VLLM).

This sequence belongs to the major facilitator superfamily.

Its subcellular location is the cell membrane. Acts to efflux copper or a copper complex. It is possible that YfmO could contribute to copper resistance. In Bacillus subtilis (strain 168), this protein is Multidrug efflux protein YfmO (yfmO).